A 4841-amino-acid chain; its full sequence is Nonribosomal peptide synthetase 2 (4841 aa).

Residues 26 to 429 form an adenylation 1 region; sequence VKPPNQNVAL…GRLSDGQVKL (404 aa). The region spanning 531–604 is the Carrier 1 domain; the sequence is EPVDEFESSL…DIIFAARRQI (74 aa). Ser-565 carries the O-(pantetheine 4'-phosphoryl)serine modification. Residues 640–1042 are condensation 1; sequence EEIIPCTPLQ…ILERPTQEIK (403 aa). The adenylation 2 stretch occupies residues 1072-1463; sequence FEDVVRKHPE…GRIDDQVKLR (392 aa). The 79-residue stretch at 1587 to 1665 folds into the Carrier 2 domain; sequence EGDWSRMDLV…QLAKHLEGKP (79 aa). O-(pantetheine 4'-phosphoryl)serine is present on Ser-1625. Residues 1702-2043 form a condensation 2 region; the sequence is ILPCTPLQEA…QTVWELEADS (342 aa). Residues 2139-2212 enclose the Carrier 3 domain; it reads SEVELDVRQV…KIAAKLLENR (74 aa). At Ser-2173 the chain carries O-(pantetheine 4'-phosphoryl)serine. Residues 2248–2663 are condensation 3; sequence AVLPCTPLQS…NHLATEDEAF (416 aa). The segment at 2695 to 3090 is adenylation 3; the sequence is AAVHPNKLAL…GRADDQVKLR (396 aa). The region spanning 3219 to 3293 is the Carrier 4 domain; it reads QDILVLLYDA…DLANCLAKAA (75 aa). At Ser-3253 the chain carries O-(pantetheine 4'-phosphoryl)serine. Positions 3333 to 3735 are condensation 4; it reads IAPCSPLQEG…DLAAESPQSE (403 aa). One can recognise a Carrier 5 domain in the interval 3759–3838; the sequence is QNSFEWTSEA…KMITELASIT (80 aa). Ser-3799 bears the O-(pantetheine 4'-phosphoryl)serine mark. The condensation 5 stretch occupies residues 3873-4242; sequence SVLPPTHLQE…VEAEAVSDSL (370 aa). In terms of domain architecture, Carrier 6 spans 4318-4394; that stretch reads IEWNQNEIGI…EMAQKADTKL (77 aa). Ser-4355 carries the O-(pantetheine 4'-phosphoryl)serine modification. Residues 4430-4726 form a condensation 6 region; sequence EVLPALPMQV…DIHLITSESR (297 aa).

It belongs to the NRP synthetase family.

It participates in siderophore biosynthesis. In terms of biological role, nonribosomal peptide synthetase; part of the gene cluster that mediates the biosynthesis of hydroxamate-containing siderophores that play a critical role in virulence. Gibberella zeae produces extracellular coprogen-type siderophores as well as the intracellular siderophore ferricrocin. The role of extracellular siderophores is to supply iron to the fungus during plant infection, and the intracellular ferricrocin is required for intracellular iron distribution and storage with a crucial role in ascus and ascospore development. SID1 catalyzes the conversion of L-ornithine to N(5)-hydroxyornithine, the first step in the biosynthesis of all hydroxamate-containing siderophores. The assembly of extracellular coprogen-type siderophores is performed by the nonribosomal peptide synthetase (NRPS) NPS6 whereas the intracellular siderophore ferricrocin is assembled by NPS2. This Gibberella zeae (strain ATCC MYA-4620 / CBS 123657 / FGSC 9075 / NRRL 31084 / PH-1) (Wheat head blight fungus) protein is Nonribosomal peptide synthetase 2.